Reading from the N-terminus, the 530-residue chain is Type 2 DNA topoisomerase 6 subunit B (530 aa).

Residues Asn42, Asp76, 97-98 (SK), 106-113 (GMYGLGVK), and Lys427 contribute to the ATP site.

Belongs to the TOP6B family. In terms of assembly, homodimer. Heterotetramer of two Top6A and two Top6B chains.

The catalysed reaction is ATP-dependent breakage, passage and rejoining of double-stranded DNA.. Its function is as follows. Relaxes both positive and negative superturns and exhibits a strong decatenase activity. In Saccharolobus solfataricus (strain ATCC 35092 / DSM 1617 / JCM 11322 / P2) (Sulfolobus solfataricus), this protein is Type 2 DNA topoisomerase 6 subunit B.